Reading from the N-terminus, the 294-residue chain is Negative regulator of the PHO system (294 aa).

The Protein kinase domain occupies 7-289; the sequence is FQQLEKLGEG…ARQSLEHPWF (283 aa). ATP-binding positions include 13 to 21 and K36; that span reads LGEGTYATV. D130 functions as the Proton acceptor in the catalytic mechanism.

The protein belongs to the protein kinase superfamily. CMGC Ser/Thr protein kinase family. CDC2/CDKX subfamily. Interacts with a number of cyclins.

It carries out the reaction L-seryl-[protein] + ATP = O-phospho-L-seryl-[protein] + ADP + H(+). The enzyme catalyses L-threonyl-[protein] + ATP = O-phospho-L-threonyl-[protein] + ADP + H(+). Its function is as follows. When phosphate concentrations are high it phosphorylates the PHO4 transcription factor thus establishing repression. This Yarrowia lipolytica (strain CLIB 122 / E 150) (Yeast) protein is Negative regulator of the PHO system (PHO85).